The primary structure comprises 310 residues: Acetaldehyde dehydrogenase 1 (310 aa).

NAD(+) is bound at residue serine 12 to isoleucine 15. Cysteine 127 acts as the Acyl-thioester intermediate in catalysis. Residues serine 163–asparagine 171 and asparagine 282 contribute to the NAD(+) site.

This sequence belongs to the acetaldehyde dehydrogenase family.

It catalyses the reaction acetaldehyde + NAD(+) + CoA = acetyl-CoA + NADH + H(+). The sequence is that of Acetaldehyde dehydrogenase 1 from Mycobacterium sp. (strain KMS).